The sequence spans 452 residues: 3-phosphoshikimate 1-carboxyvinyltransferase (452 aa).

The span at 1-17 shows a compositional bias: low complexity; it reads MSHAAAAKPATARKSQA. The interval 1–26 is disordered; it reads MSHAAAAKPATARKSQALSGTARVPG. 3-phosphoshikimate contacts are provided by lysine 28, serine 29, and arginine 33. Phosphoenolpyruvate is bound at residue lysine 28. Positions 100 and 128 each coordinate phosphoenolpyruvate. Residues serine 174, glutamine 176, aspartate 327, and lysine 354 each coordinate 3-phosphoshikimate. Glutamine 176 contributes to the phosphoenolpyruvate binding site. The Proton acceptor role is filled by aspartate 327. Arginine 358 and arginine 409 together coordinate phosphoenolpyruvate.

The protein belongs to the EPSP synthase family. Monomer.

It is found in the cytoplasm. The catalysed reaction is 3-phosphoshikimate + phosphoenolpyruvate = 5-O-(1-carboxyvinyl)-3-phosphoshikimate + phosphate. It participates in metabolic intermediate biosynthesis; chorismate biosynthesis; chorismate from D-erythrose 4-phosphate and phosphoenolpyruvate: step 6/7. Functionally, catalyzes the transfer of the enolpyruvyl moiety of phosphoenolpyruvate (PEP) to the 5-hydroxyl of shikimate-3-phosphate (S3P) to produce enolpyruvyl shikimate-3-phosphate and inorganic phosphate. The protein is 3-phosphoshikimate 1-carboxyvinyltransferase of Mesorhizobium japonicum (strain LMG 29417 / CECT 9101 / MAFF 303099) (Mesorhizobium loti (strain MAFF 303099)).